Consider the following 427-residue polypeptide: MLDTVAQSPDIDALMNDIGRKARAASRPLAFASTESKNRALAAMADAILARKDHILAENAKDLKDVEGTDILASFVDRLTLTEKRVAEMAEGIRAIAALPDPVGEVFAAWDRPNGLKIERVRTPLGVIGVIFESRPNVTADAGALCLKAGNAVILRCGSDSRRSSQAILECLVEGLKAAGLPEHAIQLVPVTDRAAVGAMLRGLEGTIDVIVPRGGKSLVARVQSEARVPVFAHLEGLCHVYIDASADLDMAKAIVVNAKMRRTGICGSAETLLVDAKAAQTHLKPLLDGLTEAGCEIRASTEVLRLVPGLKTATEEDWSTEYLDAIISVTIVDGISGAIDHISRYSSNHTEAVIAEDPAVVERFFTEIDSAILLHNASTQFADGGEFGMGAEIGIATGKMHARGPVGVEQLTSFKYRVHGTGQIRP.

Belongs to the gamma-glutamyl phosphate reductase family.

Its subcellular location is the cytoplasm. The enzyme catalyses L-glutamate 5-semialdehyde + phosphate + NADP(+) = L-glutamyl 5-phosphate + NADPH + H(+). Its pathway is amino-acid biosynthesis; L-proline biosynthesis; L-glutamate 5-semialdehyde from L-glutamate: step 2/2. Its function is as follows. Catalyzes the NADPH-dependent reduction of L-glutamate 5-phosphate into L-glutamate 5-semialdehyde and phosphate. The product spontaneously undergoes cyclization to form 1-pyrroline-5-carboxylate. This chain is Gamma-glutamyl phosphate reductase, found in Rhizobium rhizogenes (strain K84 / ATCC BAA-868) (Agrobacterium radiobacter).